The sequence spans 383 residues: Galactokinase (383 aa).

A substrate-binding site is contributed by 34-37; that stretch reads EHTD. ATP is bound at residue 124 to 130; it reads GAGLSSS. Mg(2+)-binding residues include S130 and E162. D174 serves as the catalytic Proton acceptor. A substrate-binding site is contributed by Y223.

The protein belongs to the GHMP kinase family. GalK subfamily.

The protein resides in the cytoplasm. It carries out the reaction alpha-D-galactose + ATP = alpha-D-galactose 1-phosphate + ADP + H(+). Its pathway is carbohydrate metabolism; galactose metabolism. Catalyzes the transfer of the gamma-phosphate of ATP to D-galactose to form alpha-D-galactose-1-phosphate (Gal-1-P). In Serratia proteamaculans (strain 568), this protein is Galactokinase.